Reading from the N-terminus, the 140-residue chain is Phospholipase A2 (140 aa).

The N-terminal stretch at 1-21 is a signal peptide; it reads MNPAHLLVLAAVCISLSGASS. Residues 22–27 constitute a propeptide that is removed on maturation; it reads IAPQPL. 7 cysteine pairs are disulfide-bonded: Cys-38–Cys-97, Cys-52–Cys-139, Cys-54–Cys-70, Cys-69–Cys-125, Cys-76–Cys-118, Cys-86–Cys-111, and Cys-104–Cys-116. Asn-39 carries an N-linked (GlcNAc...) asparagine glycan. Ca(2+) is bound by residues Tyr-53, Gly-55, and Gly-57. The active site involves His-73. Asp-74 serves as a coordination point for Ca(2+). The N-linked (GlcNAc...) asparagine glycan is linked to Asn-107. Residue Asp-119 is part of the active site.

The protein belongs to the phospholipase A2 family. Group I subfamily. D49 sub-subfamily. It depends on Ca(2+) as a cofactor. As to expression, expressed by the venom gland.

It is found in the secreted. It carries out the reaction a 1,2-diacyl-sn-glycero-3-phosphocholine + H2O = a 1-acyl-sn-glycero-3-phosphocholine + a fatty acid + H(+). Functionally, PLA2 catalyzes the calcium-dependent hydrolysis of the 2-acyl groups in 3-sn-phosphoglycerides. The sequence is that of Phospholipase A2 from Micrurus altirostris (Uruguayan coral snake).